A 539-amino-acid polypeptide reads, in one-letter code: O-phosphoserine--tRNA(Cys) ligase (539 aa).

Substrate is bound by residues 188–190, 233–235, 275–276, and Asn-327; these read HMT, SAS, and YY.

This sequence belongs to the class-II aminoacyl-tRNA synthetase family. O-phosphoseryl-tRNA(Cys) synthetase subfamily. As to quaternary structure, homotetramer. Interacts with SepCysS.

It catalyses the reaction tRNA(Cys) + O-phospho-L-serine + ATP = O-phospho-L-seryl-tRNA(Cys) + AMP + diphosphate. Catalyzes the attachment of O-phosphoserine (Sep) to tRNA(Cys). This Methanococcoides burtonii (strain DSM 6242 / NBRC 107633 / OCM 468 / ACE-M) protein is O-phosphoserine--tRNA(Cys) ligase.